The chain runs to 418 residues: Gamma-glutamyl phosphate reductase (418 aa).

Belongs to the gamma-glutamyl phosphate reductase family.

It is found in the cytoplasm. It catalyses the reaction L-glutamate 5-semialdehyde + phosphate + NADP(+) = L-glutamyl 5-phosphate + NADPH + H(+). It participates in amino-acid biosynthesis; L-proline biosynthesis; L-glutamate 5-semialdehyde from L-glutamate: step 2/2. Catalyzes the NADPH-dependent reduction of L-glutamate 5-phosphate into L-glutamate 5-semialdehyde and phosphate. The product spontaneously undergoes cyclization to form 1-pyrroline-5-carboxylate. In Geobacter sp. (strain M21), this protein is Gamma-glutamyl phosphate reductase.